Consider the following 56-residue polypeptide: Small ribosomal subunit protein uS14 (56 aa).

Residues Cys21, Cys24, Cys39, and Cys42 each contribute to the Zn(2+) site.

It belongs to the universal ribosomal protein uS14 family. Zinc-binding uS14 subfamily. In terms of assembly, part of the 30S ribosomal subunit. The cofactor is Zn(2+).

In terms of biological role, binds 16S rRNA, required for the assembly of 30S particles. This Pyrococcus abyssi (strain GE5 / Orsay) protein is Small ribosomal subunit protein uS14.